The chain runs to 328 residues: Phosphate acyltransferase (328 aa).

The protein belongs to the PlsX family. Homodimer. Probably interacts with PlsY.

The protein resides in the cytoplasm. The enzyme catalyses a fatty acyl-[ACP] + phosphate = an acyl phosphate + holo-[ACP]. It functions in the pathway lipid metabolism; phospholipid metabolism. Its function is as follows. Catalyzes the reversible formation of acyl-phosphate (acyl-PO(4)) from acyl-[acyl-carrier-protein] (acyl-ACP). This enzyme utilizes acyl-ACP as fatty acyl donor, but not acyl-CoA. In Mycoplasmoides gallisepticum (strain R(low / passage 15 / clone 2)) (Mycoplasma gallisepticum), this protein is Phosphate acyltransferase.